Consider the following 190-residue polypeptide: Potassium-transporting ATPase KdpC subunit (190 aa).

Residues 10-30 form a helical membrane-spanning segment; that stretch reads TFIFLLLITGGVYPLLTTVLG.

The protein belongs to the KdpC family. The system is composed of three essential subunits: KdpA, KdpB and KdpC.

It is found in the cell inner membrane. Part of the high-affinity ATP-driven potassium transport (or Kdp) system, which catalyzes the hydrolysis of ATP coupled with the electrogenic transport of potassium into the cytoplasm. This subunit acts as a catalytic chaperone that increases the ATP-binding affinity of the ATP-hydrolyzing subunit KdpB by the formation of a transient KdpB/KdpC/ATP ternary complex. This Escherichia coli (strain K12 / MC4100 / BW2952) protein is Potassium-transporting ATPase KdpC subunit.